A 169-amino-acid chain; its full sequence is Probable inosine/xanthosine triphosphatase (169 aa).

7 to 12 (STNKAK) lines the substrate pocket. E35 lines the Mg(2+) pocket.

Belongs to the YjjX NTPase family. As to quaternary structure, homodimer. Mg(2+) serves as cofactor. It depends on Mn(2+) as a cofactor.

It catalyses the reaction XTP + H2O = XDP + phosphate + H(+). The catalysed reaction is ITP + H2O = IDP + phosphate + H(+). Phosphatase that hydrolyzes non-canonical purine nucleotides such as XTP and ITP to their respective diphosphate derivatives. Probably excludes non-canonical purines from DNA/RNA precursor pool, thus preventing their incorporation into DNA/RNA and avoiding chromosomal lesions. The protein is Probable inosine/xanthosine triphosphatase of Sulfurisphaera tokodaii (strain DSM 16993 / JCM 10545 / NBRC 100140 / 7) (Sulfolobus tokodaii).